An 827-amino-acid chain; its full sequence is Leucine--tRNA ligase (827 aa).

The 'HIGH' region motif lies at P46–H56. The short motif at K585 to S589 is the 'KMSKS' region element. ATP is bound at residue K588.

It belongs to the class-I aminoacyl-tRNA synthetase family.

The protein localises to the cytoplasm. The enzyme catalyses tRNA(Leu) + L-leucine + ATP = L-leucyl-tRNA(Leu) + AMP + diphosphate. This chain is Leucine--tRNA ligase, found in Desulfotalea psychrophila (strain LSv54 / DSM 12343).